The sequence spans 346 residues: Oxidoreductase calI (346 aa).

A disordered region spans residues 11–33 (VSTPQGRGDGRPTADQVLRDQDP). The span at 18-32 (GDGRPTADQVLRDQD) shows a compositional bias: basic and acidic residues. NADP(+) contacts are provided by Leu-52, Lys-76, Asp-100, and Asn-128. Catalysis depends on Ser-181, which acts as the Proton donor. NADP(+) is bound by residues Tyr-208, Lys-212, and Ile-241. The Proton acceptor role is filled by Tyr-208. The Lowers pKa of active site Tyr role is filled by Lys-212.

The protein belongs to the short-chain dehydrogenases/reductases (SDR) family.

It participates in secondary metabolite biosynthesis. Oxidoreductase; part of the gene cluster that mediates the biosynthesis of calbistrin A and related compounds. Calbistrin A is a secondary metabolite with an interesting structure that was recently found to have bioactivity against leukemia cells. It consists of two polyketides linked by an ester bond: a bicyclic decalin containing polyketide and a linear 12 carbon dioic acid structure. The polyketide synthase calA is probably responsible for forming the decalin moiety. Because calA lacks a designated enoylreductase (ER) domain, the required activity is provided by the trans-enoyl reductase calK. Following release from the PKS, calF then probably catalyzes the oxidation and the subsequent Diels Alder cycloisomerization that lead to the formation of the decalin moiety. The decalin polyketide backbone includes two C-methyl groups, at C7 and C11 in backbone, of which the C7 position is probably methylated by the methyltransferase domain of calA. A candidate for adding the methyl group at C11, if not done by CalA, is the cluster methyltransferase calH. Several additional tailoring enzymes within the cluster could be involved in the modification of the decalin polyketide product. Those include the 3 cytochrome P450 monooxygenases CalE, CalG and CalL, of which one might be responsible for the introduction of the extra hydroxyl group attached to the backbone of the decalin moiety, at position C9 in the backbone, that allows for attachment of the linear moiety. One tailoring enzyme activity that is expected to be involved in biosynthesis of calbistrin is an acyltransferase for connecting the two polyketide synthase products, and which could be performed by the cluster acyltransferase calJ. The enzyme responsible for the biosynthesis of the linear moiety, probably a second PKS, has not been identified yet. The chain is Oxidoreductase calI from Penicillium decumbens.